The primary structure comprises 27 residues: Defensin-like protein 1 (27 aa).

Residue glutamine 1 is modified to Pyrrolidone carboxylic acid.

Belongs to the DEFL family. In terms of assembly, forms oligomers in its native state.

Possesses antifungal activity sensitive to inorganic cations. This is Defensin-like protein 1 from Brassica campestris (Field mustard).